A 419-amino-acid polypeptide reads, in one-letter code: Peroxisomal membrane protein PMP47B (419 aa).

Solcar repeat units lie at residues 6 to 120 (YDDL…TGKT), 142 to 230 (LSVW…LKSF), and 239 to 369 (VTPV…LLIL). The chain crosses the membrane as a helical span at residues 12–32 (AFAGAGGGLLSMTLTYPLVTL). Residues 44 to 53 (KNEEEEKENS) are compositionally biased toward basic and acidic residues. The tract at residues 44-69 (KNEEEEKENSNEDGSLSPKSSNTSNI) is disordered. The segment covering 56–69 (DGSLSPKSSNTSNI) has biased composition (polar residues). 3 helical membrane passes run 98–118 (SALF…ELTG), 204–224 (FTGI…YTIF), and 245–265 (LLLG…YITL). A disordered region spans residues 274–305 (MTENNEDSEKERTDSVQSLPEDGSDEDNSKEN). Transmembrane regions (helical) follow at residues 310–330 (TINK…IIGY) and 349–369 (LLQS…LLIL).

It belongs to the mitochondrial carrier (TC 2.A.29) family.

It localises to the peroxisome membrane. May have transport activity. This Candida boidinii (Yeast) protein is Peroxisomal membrane protein PMP47B (PMP47B).